Consider the following 248-residue polypeptide: Transcription factor Spi-C (248 aa).

The ETS DNA-binding region spans 111-194; it reads LRLFEYLHES…IRRKLTYQFS (84 aa).

It belongs to the ETS family. In terms of assembly, binds DNA as a monomer.

The protein resides in the nucleus. Its function is as follows. Controls the development of red pulp macrophages required for red blood cells recycling and iron homeostasis. Transcription factor that binds to the PU-box, a purine-rich DNA sequence (5'-GAGGA[AT]-3') that can act as a lymphoid-specific enhancer. Regulates VCAM1 gene expression. The protein is Transcription factor Spi-C (SPIC) of Bos taurus (Bovine).